Reading from the N-terminus, the 202-residue chain is LexA repressor (202 aa).

The H-T-H motif DNA-binding region spans 28–48 (RAEIAQRLGFRSPNAAEEHLK). Residues serine 119 and lysine 156 each act as for autocatalytic cleavage activity in the active site.

Belongs to the peptidase S24 family. Homodimer.

The catalysed reaction is Hydrolysis of Ala-|-Gly bond in repressor LexA.. Functionally, represses a number of genes involved in the response to DNA damage (SOS response), including recA and lexA. Binds to the 16 bp palindromic sequence 5'-CTGTATATATATACAG-3'. In the presence of single-stranded DNA, RecA interacts with LexA causing an autocatalytic cleavage which disrupts the DNA-binding part of LexA, leading to derepression of the SOS regulon and eventually DNA repair. The protein is LexA repressor of Klebsiella pneumoniae (strain 342).